Reading from the N-terminus, the 207-residue chain is MGGKWSKSSIVGWPEVRERIRNTPTAAEGVGAVSQDLDRHGAITSSNTAANNPDCAWLEAQEEDSEVGFPVRPQVPLRPMTFKGAFDLSFFLKEKGGLDGLIYSKKRQEILDLWVYNTQGYFPDWQNYTPGPGTRFPLTFGWCFKLVPMDPAEVEEANKGENNSLLHPICQHGMEDEDREVLVWRFDSSLARRHIARELHPEYYKDC.

Gly2 is lipidated: N-myristoyl glycine; by host. Ser6 is modified (phosphoserine; by host). The segment at 62–66 (EEDSE) is acidic; interacts with host PACS1 and PACS2; stabilizes the interaction of NEF/MHC-I with host AP1M1; necessary for MHC-I internalization. The segment at 70–79 (PVRPQVPLRP) is SH3-binding; interaction with Src family tyrosine kinases. Positions 73-76 (PQVP) match the PxxP; stabilizes the interaction of NEF/MHC-I with host AP1M1; necessary for MHC-I internalization motif. The segment at 109–125 (EILDLWVYNTQGYFPDW) is mediates dimerization, Nef-PTE1 interaction. The binding to ATP6V1H stretch occupies residues 149 to 181 (MDPAEVEEANKGENNSLLHPICQHGMEDEDREV). Residues 165 to 166 (LL) carry the Dileucine internalization motif; necessary for CD4 internalization motif. The Diacidic; necessary for CD4 internalization motif lies at 175–176 (ED).

Belongs to the lentivirus primate group Nef protein family. In terms of assembly, monomer; cytosolic form. Homodimer; membrane bound form. Interacts with Nef associated p21-activated kinase (PAK2); this interaction activates PAK2. Associates with the Nef-MHC-I-AP1 complex; this complex is required for MHC-I internalization. Interacts (via C-terminus) with host PI3-kinase. Interacts with host PACS1; this interaction seems to be weak. Interacts with host PACS2. Interacts with host LCK and MAPK3; these interactions inhibit the kinase activity of the latter. Interacts with host ATP6V1H; this interaction may play a role in CD4 endocytosis. Associates with the CD4-Nef-AP2 complex; this complex is required for CD4 internalization. Interacts with host AP2 subunit alpha and AP2 subunit sigma2. Interacts with TCR-zeta chain; this interaction up-regulates the Fas ligand (FasL) surface expression. Interacts with host HCK, LYN, and SRC; these interactions activate the Src family kinases. Interacts with MAP3K5; this interaction inhibits the Fas and TNFR-mediated death signals. Interacts with beta-COP and PTE1. Interacts with human RACK1; this increases Nef phosphorylation by PKC. Interacts with TP53; this interaction decreases the half-life of TP53, protecting the infected cell against p53-mediated apoptosis. Post-translationally, the virion-associated Nef proteins are cleaved by the viral protease to release the soluble C-terminal core protein. Nef is probably cleaved concomitantly with viral structural proteins on maturation of virus particles. Myristoylated. In terms of processing, phosphorylated on serine residues, probably by host PKCdelta and theta.

Its subcellular location is the host cell membrane. The protein resides in the virion. The protein localises to the secreted. It is found in the host Golgi apparatus membrane. Functionally, factor of infectivity and pathogenicity, required for optimal virus replication. Alters numerous pathways of T-lymphocyte function and down-regulates immunity surface molecules in order to evade host defense and increase viral infectivity. Alters the functionality of other immunity cells, like dendritic cells, monocytes/macrophages and NK cells. In terms of biological role, in infected CD4(+) T-lymphocytes, down-regulates the surface MHC-I, mature MHC-II, CD4, CD28, CCR5 and CXCR4 molecules. Mediates internalization and degradation of host CD4 through the interaction of with the cytoplasmic tail of CD4, the recruitment of AP-2 (clathrin adapter protein complex 2), internalization through clathrin coated pits, and subsequent transport to endosomes and lysosomes for degradation. Diverts host MHC-I molecules to the trans-Golgi network-associated endosomal compartments by an endocytic pathway to finally target them for degradation. MHC-I down-regulation may involve AP-1 (clathrin adapter protein complex 1) or possibly Src family kinase-ZAP70/Syk-PI3K cascade recruited by PACS2. In consequence infected cells are masked for immune recognition by cytotoxic T-lymphocytes. Decreasing the number of immune receptors also prevents reinfection by more HIV particles (superinfection). Down-regulates host SERINC3 and SERINC5 thereby excluding these proteins from the viral particles. Virion infectivity is drastically higher when SERINC3 or SERINC5 are excluded from the viral envelope, because these host antiviral proteins impair the membrane fusion event necessary for subsequent virion penetration. Bypasses host T-cell signaling by inducing a transcriptional program nearly identical to that of anti-CD3 cell activation. Interaction with TCR-zeta chain up-regulates the Fas ligand (FasL). Increasing surface FasL molecules and decreasing surface MHC-I molecules on infected CD4(+) cells send attacking cytotoxic CD8+ T-lymphocytes into apoptosis. Its function is as follows. Plays a role in optimizing the host cell environment for viral replication without causing cell death by apoptosis. Protects the infected cells from apoptosis in order to keep them alive until the next virus generation is ready to strike. Inhibits the Fas and TNFR-mediated death signals by blocking MAP3K5/ASK1. Decreases the half-life of TP53, protecting the infected cell against p53-mediated apoptosis. Inhibits the apoptotic signals regulated by the Bcl-2 family proteins through the formation of a Nef/PI3-kinase/PAK2 complex that leads to activation of PAK2 and induces phosphorylation of host BAD. Functionally, extracellular Nef protein targets CD4(+) T-lymphocytes for apoptosis by interacting with CXCR4 surface receptors. The polypeptide is Protein Nef (Homo sapiens (Human)).